The primary structure comprises 166 residues: Xanthine-guanine phosphoribosyltransferase (166 aa).

Residues R42–G43 and D99–T107 contribute to the 5-phospho-alpha-D-ribose 1-diphosphate site. Residue D100 participates in Mg(2+) binding. Residues D103 and I146 each contribute to the guanine site. The xanthine site is built by D103 and I146. GMP is bound by residues D103–T107 and W145–I146.

The protein belongs to the purine/pyrimidine phosphoribosyltransferase family. XGPT subfamily. In terms of assembly, homotetramer. Mg(2+) is required as a cofactor.

It is found in the cell inner membrane. The enzyme catalyses GMP + diphosphate = guanine + 5-phospho-alpha-D-ribose 1-diphosphate. The catalysed reaction is XMP + diphosphate = xanthine + 5-phospho-alpha-D-ribose 1-diphosphate. It catalyses the reaction IMP + diphosphate = hypoxanthine + 5-phospho-alpha-D-ribose 1-diphosphate. Its pathway is purine metabolism; GMP biosynthesis via salvage pathway; GMP from guanine: step 1/1. It participates in purine metabolism; XMP biosynthesis via salvage pathway; XMP from xanthine: step 1/1. In terms of biological role, purine salvage pathway enzyme that catalyzes the transfer of the ribosyl-5-phosphate group from 5-phospho-alpha-D-ribose 1-diphosphate (PRPP) to the N9 position of the 6-oxopurines guanine and xanthine to form the corresponding ribonucleotides GMP (guanosine 5'-monophosphate) and XMP (xanthosine 5'-monophosphate), with the release of PPi. To a lesser extent, also acts on hypoxanthine. In Mesorhizobium japonicum (strain LMG 29417 / CECT 9101 / MAFF 303099) (Mesorhizobium loti (strain MAFF 303099)), this protein is Xanthine-guanine phosphoribosyltransferase.